The primary structure comprises 200 residues: Recombination protein RecR (200 aa).

The C4-type zinc finger occupies 59–74; sequence CSTCGNIDSQNPCTVC. A Toprim domain is found at 82 to 177; sequence SIIVVVADVA…KVTRLAHGVP (96 aa).

Belongs to the RecR family.

Its function is as follows. May play a role in DNA repair. It seems to be involved in an RecBC-independent recombinational process of DNA repair. It may act with RecF and RecO. The protein is Recombination protein RecR of Rhodopseudomonas palustris (strain ATCC BAA-98 / CGA009).